The chain runs to 438 residues: GTPase Der (438 aa).

EngA-type G domains follow at residues 4–168 and 177–352; these read PIVA…PKGY and IRIA…TNYS. GTP is bound by residues 10–17, 57–61, 120–123, 183–190, 230–234, and 295–298; these read GRPNVGKS, DTGGI, NKID, GKPNVGKS, DTAGL, and NKWD. Positions 353–437 constitute a KH-like domain; sequence KRISTGVLND…GIKMEFRERK (85 aa).

This sequence belongs to the TRAFAC class TrmE-Era-EngA-EngB-Septin-like GTPase superfamily. EngA (Der) GTPase family. In terms of assembly, associates with the 50S ribosomal subunit.

Functionally, GTPase that plays an essential role in the late steps of ribosome biogenesis. This is GTPase Der from Clostridium tetani (strain Massachusetts / E88).